Here is a 434-residue protein sequence, read N- to C-terminus: ATP-dependent protease ATPase subunit HslU (434 aa).

Residues Ile18, 60–65 (GVGKTE), Asp247, Glu312, and Arg384 each bind ATP.

This sequence belongs to the ClpX chaperone family. HslU subfamily. In terms of assembly, a double ring-shaped homohexamer of HslV is capped on each side by a ring-shaped HslU homohexamer. The assembly of the HslU/HslV complex is dependent on binding of ATP.

Its subcellular location is the cytoplasm. Functionally, ATPase subunit of a proteasome-like degradation complex; this subunit has chaperone activity. The binding of ATP and its subsequent hydrolysis by HslU are essential for unfolding of protein substrates subsequently hydrolyzed by HslV. HslU recognizes the N-terminal part of its protein substrates and unfolds these before they are guided to HslV for hydrolysis. The sequence is that of ATP-dependent protease ATPase subunit HslU from Sinorhizobium fredii (strain NBRC 101917 / NGR234).